We begin with the raw amino-acid sequence, 367 residues long: Heme A synthase (367 aa).

Helical transmembrane passes span 26-46 (IRGW…VGGA), 111-131 (LLAR…WVTG), 139-159 (LPLL…WWMV), 174-194 (LATH…IYRG), 212-232 (AAVI…VAGL), 272-292 (FVHR…MIAA), 305-325 (SVLL…TLLL), and 327-347 (VPIG…GFAI). His-274 serves as a coordination point for heme. Residue His-335 participates in heme binding.

The protein belongs to the COX15/CtaA family. Type 2 subfamily. In terms of assembly, interacts with CtaB. It depends on heme b as a cofactor.

The protein localises to the cell membrane. The enzyme catalyses Fe(II)-heme o + 2 A + H2O = Fe(II)-heme a + 2 AH2. It participates in porphyrin-containing compound metabolism; heme A biosynthesis; heme A from heme O: step 1/1. Its function is as follows. Catalyzes the conversion of heme O to heme A by two successive hydroxylations of the methyl group at C8. The first hydroxylation forms heme I, the second hydroxylation results in an unstable dihydroxymethyl group, which spontaneously dehydrates, resulting in the formyl group of heme A. The chain is Heme A synthase from Sinorhizobium medicae (strain WSM419) (Ensifer medicae).